A 154-amino-acid chain; its full sequence is C-type lectin 16 (154 aa).

The first 20 residues, 1-20 (MALSLYLIAVICSLVGFTAS), serve as a signal peptide directing secretion. The C-type lectin domain occupies 27–152 (DNRFCFPNVV…CASMRRFVCE (126 aa)). 2 disulfide bridges follow: C46–C151 and C123–C143.

(Microbial infection) Interacts with non-structural protein 1 of dengue virus type 2. Interacts with envelope protein E of dengue virus type 2. As to expression, female salivary gland (at protein level). Not detected in female carcass without salivary glands (at protein level). Not detected in male tissues (at protein level).

The protein localises to the secreted. Its function is as follows. Putative lectin. May have a regulatory role in mosquito immunity. Probably suppresses replication of dengue virus type 2 in mosquito salivary glands. This Aedes aegypti (Yellowfever mosquito) protein is C-type lectin 16.